The sequence spans 87 residues: UPF0175 protein AF_0597 (87 aa).

This sequence belongs to the UPF0175 family.

In Archaeoglobus fulgidus (strain ATCC 49558 / DSM 4304 / JCM 9628 / NBRC 100126 / VC-16), this protein is UPF0175 protein AF_0597.